A 357-amino-acid polypeptide reads, in one-letter code: Acyl-coenzyme A:6-aminopenicillanic-acid-acyltransferase 40 kDa form (357 aa).

Positions 121 and 310 each coordinate 6-aminopenicillanate.

This sequence belongs to the peptidase C45 family. As to quaternary structure, the active form of the enzyme results from processing of the 40-kDa monomeric precursor to a heterodimer containing subunits of 11 and 29 kDa. In terms of processing, the pre-AAT protein is synthesized as 40 kDa precursor which is then self-processed into an 11 kDa (protein A) and a 29 kDa (protein B). The B protein carries AAT activity.

The protein localises to the peroxisome matrix. The catalysed reaction is isopenicillin N + phenylacetyl-CoA + H2O = penicillin G + L-2-aminoadipate + CoA + H(+). It functions in the pathway antibiotic biosynthesis; penicillin G biosynthesis; penicillin G from L-alpha-aminoadipate and L-cysteine and L-valine: step 3/3. Nonribosomal peptide synthetase; part of the gene cluster that mediates the biosynthesis of penicillin, the world's most important antibiotic. AatA catalyzes the exchange of the alpha-aminoadipyl side chain of isopenicillin N for phenylacetic acid to yield penicillin. This step occurs in the peroxisomal matrix and the penM and paaT transporters are involved in the isopenicillin N and phenylacetic acid import into the peroxisome, respectively. The penicillin biosynthesis occurs via 3 enzymatic steps, the first corresponding to the production of the tripeptide N-[(5S)-5-amino-5-carboxypentanoyl]-L-cysteinyl-D-valine (LLD-ACV or ACV) by the NRPS acvA. The tripeptide ACV is then cyclized to isopenicillin N (IPN) by the isopenicillin N synthase ipnA that forms the beta-lactam nucleus. Finally, the alpha-aminoadipyl side chain is exchanged for phenylacetic acid by the isopenicillin N acyltransferase penDE to yield penicillin in the peroxisomal matrix. This is Acyl-coenzyme A:6-aminopenicillanic-acid-acyltransferase 40 kDa form from Emericella nidulans (strain FGSC A4 / ATCC 38163 / CBS 112.46 / NRRL 194 / M139) (Aspergillus nidulans).